A 45-amino-acid chain; its full sequence is Large ribosomal subunit protein bL34 (45 aa).

It belongs to the bacterial ribosomal protein bL34 family.

This chain is Large ribosomal subunit protein bL34, found in Kocuria rhizophila (strain ATCC 9341 / DSM 348 / NBRC 103217 / DC2201).